A 673-amino-acid chain; its full sequence is MPPTNKANSKKGLTLPGYNYLGPFNSLFAGAPVNKADAAARKHDFGYSDLLKEGKNPYLYFNTHDQNLIDELKDDTSFGGKLARGVFQIKKALAPALPGTSKGGDKALKRKLYFARSNKGAKKANREPAPSTSNQQNMEVSNDIPNDEAGNQPIELATRSVGGSGSVGGGGRGGSGVGYSTGGWTGGTIFSENIVVTKNTRQFICDIKNGHLYKSEVLNTGDTAHRQYAITTPWSYFNFNQYSSHFSPNDWQHLVNDYERFRPKAMIVRVYNLQIKQIMTDGAMGTVYNNDLTAGMHIFCDGDHRYPYVQHPWDDQCMPELPNSIWELPQYAYIPAPISVVDNNTTNTVEEHLLKGVPLYMLENSDHEVLRTGESTEFTFNFGDCEWIENNITFSMPQMMYNPLVRSRRIYSYSGPNNQTSNAFQNAALRTSNWMSGPGIARGTHNATLQTQSAGALVTMVTNGADVSGVGAVRVGYSTDPIYGGQQPDSDLLRLRYSASAAEGQQNPILENAARHTFTREARTKLITGSNGADGNYKEWWMLPNQMWDSAPISRYNPIWVKVPRVNRKTLLDTQDGSIPMSHPPGTIFIKLARIPVPGNGDSFLNIYVTGQVSCEVVWEVEKRGTKNWRPEYMHSATNMSVDAYTINNAGVYAGAVQNADVMQTRFNHHKVL.

The segment at 13-68 (LTLPGYNYLGPFNSLFAGAPVNKADAAARKHDFGYSDLLKEGKNPYLYFNTHDQNL) is phospholipase A2-like. The disordered stretch occupies residues 118 to 151 (NKGAKKANREPAPSTSNQQNMEVSNDIPNDEAGN). Residues 130–144 (PSTSNQQNMEVSNDI) are compositionally biased toward polar residues. Positions 623–634 (KRGTKNWRPEYM) match the Nuclear localization signal motif.

Belongs to the parvoviridae capsid protein family. Heteromultimer of isoform Minor capsid protein VP1, isoform Minor capsid protein VP2 and isoform Major capsid protein VP3. As to quaternary structure, homomultimer. 10 fold more abundant than the minor capsid proteins VP1 and VP2. Heteromultimer of isoform Minor capsid protein VP1, isoform Minor capsid protein VP2 and isoform Major capsid protein VP3.

The protein localises to the virion. The protein resides in the host nucleus. Its subcellular location is the host cytoplasm. The enzyme catalyses a 1,2-diacyl-sn-glycero-3-phosphocholine + H2O = a 1-acyl-sn-glycero-3-phosphocholine + a fatty acid + H(+). Its function is as follows. Capsid proteins self-assembles to form an icosahedral capsid with a T=1 symmetry, about 26 nm in diameter, and consisting of 60 copies of three size variants of the capsid proteins, VP1, and VP3, which differ by the presence of an N-terminal extension in the minor protein VP1. The capsid has a channel at the 5-fold axis and there are densities extending the 5-fold axis into the interior of the capsid. The capsid encapsulates the genomic ssDNA. Binding to the host receptors also induces capsid rearrangements leading to surface exposure of VP1 N-terminus, specifically its phospholipase A2-like region. The additional N-terminal region of isoform Minor capsid protein VP1, called VP1u, may serve as a lipolytic enzyme to breach the endosomal membrane during entry into host cell and might contribute to virus transport to the nucleus. This chain is Minor capsid protein VP1, found in Bovine parvovirus 1 (BPV-1).